The primary structure comprises 117 residues: Large ribosomal subunit protein uL18 (117 aa).

This sequence belongs to the universal ribosomal protein uL18 family. As to quaternary structure, part of the 50S ribosomal subunit; part of the 5S rRNA/L5/L18/L25 subcomplex. Contacts the 5S and 23S rRNAs.

In terms of biological role, this is one of the proteins that bind and probably mediate the attachment of the 5S RNA into the large ribosomal subunit, where it forms part of the central protuberance. The polypeptide is Large ribosomal subunit protein uL18 (Onion yellows phytoplasma (strain OY-M)).